Consider the following 121-residue polypeptide: RING-box protein HRT1 (121 aa).

Residues 1 to 31 (MSNEVDRMDVDEDESQNIAQSSNQSAPVETK) are disordered. Serine 15 is modified (phosphoserine). A compositionally biased stretch (low complexity) spans 16–26 (QNIAQSSNQSA). Zn(2+) is bound by residues cysteine 55, cysteine 58, cysteine 66, cysteine 69, cysteine 81, cysteine 88, histidine 90, histidine 93, histidine 95, cysteine 107, and aspartate 110. The RING-type zinc-finger motif lies at 55–111 (CAICRNHIMEPCIECQPKAMTDTDNECVAAWGVCNHAFHLHCINKWIKTRDACPLDN).

This sequence belongs to the RING-box family. In terms of assembly, component of multiple cullin-RING ligases (CRLs) composed of 4 subunits: the RING protein HRT1, a cullin, a linker protein, and one of many alternative substrate receptors. Component of SCF E3 ubiquitin ligase complexes containing the cullin CDC53, the linker protein SKP1/CBF3D, and substrate receptors containing F-box motifs like DAS1 or GRR1. Component of RTT101(MMS1) E3 ubiquitin ligase complexes containing the cullin RTT101, the linker protein MMS1, and substrate receptors belonging to a protein family described as DCAF (DDB1- and CUL4-associated factor) like MMS22. Component of CRL3 E3 ubiquitin ligase complexes containing the cullin CUL3, the linker protein ELC1, and substrate receptors containing SOCS-box motifs like ELA1. Interacts with CDC53, CUL3, RTT101, CDC4 and CDC34/UBC3.

It localises to the cytoplasm. The protein localises to the nucleus. Its pathway is protein modification; protein ubiquitination. Functionally, core component of multiple cullin-RING-based E3 ubiquitin-protein ligase complexes (CRLs), which mediate the ubiquitination of target proteins. Recruits the E2 ubiquitin-conjugating enzyme CDC34/UBC3 to the complex and brings it into close proximity to the substrate. Also stimulates CDC34/UBC3 autoubiquitination and promotes the neddylation of CDC53 and RTT101. Component of the SCF(CDC4) ubiquitin ligase required for ubiquitination of the cyclin-dependent kinase inhibitor SIC1 and for the G1-to-S phase transition. Component of the RTT101(MMS1-MMS22) ubiquitin ligase that promotes fork progression through damaged DNA or natural pause sites. Component of the CRL3(ELA1) ubiquitin ligase required for ubiquitination of RPB1, the largest subunit of RNA polymerase II (Pol II), which targets Pol II for proteasomal degradation in DNA-damaged cells. In Saccharomyces cerevisiae (strain ATCC 204508 / S288c) (Baker's yeast), this protein is RING-box protein HRT1 (HRT1).